Consider the following 985-residue polypeptide: Regulator of telomere elongation helicase 1 homolog (985 aa).

The Helicase ATP-binding domain maps to 7-303 (AGIPVHFPFE…QDMGGDEPKD (297 aa)). ATP is bound at residue 42–49 (SPTGTGKT). 4 residues coordinate [4Fe-4S] cluster: cysteine 146, cysteine 164, cysteine 173, and cysteine 209. The short motif at 252-255 (DEAH) is the DEAH box element. The interval 858-884 (GSSGMVKIHKRERSSPTQPESSSQVSK) is disordered. The span at 872–882 (SPTQPESSSQV) shows a compositional bias: polar residues. Threonine 874 is subject to Phosphothreonine.

This sequence belongs to the helicase family. RAD3/XPD subfamily.

It is found in the nucleus. The enzyme catalyses ATP + H2O = ADP + phosphate + H(+). Its function is as follows. A probable ATP-dependent DNA helicase implicated in DNA repair and the maintenance of genomic stability. Acts as an anti-recombinase to counteract toxic recombination and limit crossover during meiosis. Regulates meiotic recombination and crossover homeostasis by physically dissociating strand invasion events and thereby promotes noncrossover repair by meiotic synthesis dependent strand annealing (SDSA) as well as disassembly of D loop recombination intermediates. This Drosophila yakuba (Fruit fly) protein is Regulator of telomere elongation helicase 1 homolog.